The sequence spans 1024 residues: Carbamoyl phosphate synthase large chain (1024 aa).

Residues 1–402 (MPKRTDLQTI…SLQKALRSTE (402 aa)) are carboxyphosphate synthetic domain. 12 residues coordinate ATP: arginine 129, arginine 169, glycine 175, glycine 176, glutamate 208, isoleucine 210, glutamate 215, glycine 241, valine 242, histidine 243, glutamine 285, and glutamate 299. Positions 133 to 328 (QAAMKKIGVE…IAKIAALLAV (196 aa)) constitute an ATP-grasp 1 domain. The Mg(2+) site is built by glutamine 285, glutamate 299, and asparagine 301. Mn(2+) is bound by residues glutamine 285, glutamate 299, and asparagine 301. The oligomerization domain stretch occupies residues 403–546 (GDIRGVYAEM…YSTYEWEDEV (144 aa)). Residues 547 to 929 (APTDKPKVVI…AFYRAQLGAK (383 aa)) are carbamoyl phosphate synthetic domain. Residues 671–863 (NALCERLGLP…LAKSAARIAA (193 aa)) enclose the ATP-grasp 2 domain. Residues arginine 707, glutamine 747, leucine 749, glutamate 754, glycine 779, valine 780, histidine 781, serine 782, glutamine 822, and glutamate 834 each coordinate ATP. Mg(2+) is bound by residues glutamine 822, glutamate 834, and asparagine 836. Residues glutamine 822, glutamate 834, and asparagine 836 each contribute to the Mn(2+) site. The region spanning 930–1024 (NYLPLEGTAL…GVRSLQEWVK (95 aa)) is the MGS-like domain. The allosteric domain stretch occupies residues 930-1024 (NYLPLEGTAL…GVRSLQEWVK (95 aa)).

Belongs to the CarB family. Composed of two chains; the small (or glutamine) chain promotes the hydrolysis of glutamine to ammonia, which is used by the large (or ammonia) chain to synthesize carbamoyl phosphate. Tetramer of heterodimers (alpha,beta)4. It depends on Mg(2+) as a cofactor. The cofactor is Mn(2+).

The enzyme catalyses hydrogencarbonate + L-glutamine + 2 ATP + H2O = carbamoyl phosphate + L-glutamate + 2 ADP + phosphate + 2 H(+). It catalyses the reaction hydrogencarbonate + NH4(+) + 2 ATP = carbamoyl phosphate + 2 ADP + phosphate + 2 H(+). It functions in the pathway amino-acid biosynthesis; L-arginine biosynthesis; carbamoyl phosphate from bicarbonate: step 1/1. It participates in pyrimidine metabolism; UMP biosynthesis via de novo pathway; (S)-dihydroorotate from bicarbonate: step 1/3. Its function is as follows. Large subunit of the glutamine-dependent carbamoyl phosphate synthetase (CPSase). CPSase catalyzes the formation of carbamoyl phosphate from the ammonia moiety of glutamine, carbonate, and phosphate donated by ATP, constituting the first step of 2 biosynthetic pathways, one leading to arginine and/or urea and the other to pyrimidine nucleotides. The large subunit (synthetase) binds the substrates ammonia (free or transferred from glutamine from the small subunit), hydrogencarbonate and ATP and carries out an ATP-coupled ligase reaction, activating hydrogencarbonate by forming carboxy phosphate which reacts with ammonia to form carbamoyl phosphate. This is Carbamoyl phosphate synthase large chain from Deinococcus radiodurans (strain ATCC 13939 / DSM 20539 / JCM 16871 / CCUG 27074 / LMG 4051 / NBRC 15346 / NCIMB 9279 / VKM B-1422 / R1).